We begin with the raw amino-acid sequence, 175 residues long: Vesicle-associated membrane protein-associated protein SCS22 (175 aa).

Residues 1–125 (MRIVPEKLVF…DDIVFKKIKI (125 aa)) enclose the MSP domain. Residues 1 to 154 (MRIVPEKLVF…RAPSAGNGQS (154 aa)) are Cytoplasmic-facing. The segment at 133–152 (RKPSGNHDAESARAPSAGNG) is disordered. A helical; Anchor for type IV membrane protein membrane pass occupies residues 155-175 (LSSRALLIITVIALLVGWIYY).

The protein belongs to the VAMP-associated protein (VAP) (TC 9.B.17) family.

It is found in the membrane. In terms of biological role, targets proteins containing a FFAT motif to membranes. Involved in regulation of phospholipid metabolism. The chain is Vesicle-associated membrane protein-associated protein SCS22 (SCS22) from Saccharomyces cerevisiae (strain ATCC 204508 / S288c) (Baker's yeast).